The chain runs to 226 residues: Phosphatidylserine decarboxylase proenzyme (226 aa).

Catalysis depends on Ser184, which acts as the Schiff-base intermediate with substrate; via pyruvic acid. Ser184 carries the pyruvic acid (Ser); by autocatalysis modification.

It belongs to the phosphatidylserine decarboxylase family. PSD-A subfamily. In terms of assembly, heterodimer of a large membrane-associated beta subunit and a small pyruvoyl-containing alpha subunit. Requires pyruvate as cofactor. Post-translationally, is synthesized initially as an inactive proenzyme. Formation of the active enzyme involves a self-maturation process in which the active site pyruvoyl group is generated from an internal serine residue via an autocatalytic post-translational modification. Two non-identical subunits are generated from the proenzyme in this reaction, and the pyruvate is formed at the N-terminus of the alpha chain, which is derived from the carboxyl end of the proenzyme. The post-translation cleavage follows an unusual pathway, termed non-hydrolytic serinolysis, in which the side chain hydroxyl group of the serine supplies its oxygen atom to form the C-terminus of the beta chain, while the remainder of the serine residue undergoes an oxidative deamination to produce ammonia and the pyruvoyl prosthetic group on the alpha chain.

Its subcellular location is the cell membrane. It carries out the reaction a 1,2-diacyl-sn-glycero-3-phospho-L-serine + H(+) = a 1,2-diacyl-sn-glycero-3-phosphoethanolamine + CO2. Its pathway is phospholipid metabolism; phosphatidylethanolamine biosynthesis; phosphatidylethanolamine from CDP-diacylglycerol: step 2/2. Functionally, catalyzes the formation of phosphatidylethanolamine (PtdEtn) from phosphatidylserine (PtdSer). The polypeptide is Phosphatidylserine decarboxylase proenzyme (Ehrlichia chaffeensis (strain ATCC CRL-10679 / Arkansas)).